The chain runs to 106 residues: Gas vesicle protein J (106 aa).

It belongs to the gas vesicle GvpA family.

It localises to the gas vesicle. In terms of biological role, a minor component of the gas vesicle, might be involved in nucleating gas vesicle formation. Gas vesicles are hollow, gas filled proteinaceous nanostructures found in some microorganisms. It is not clear what function gas vesicles perform in soil bacteria. This chain is Gas vesicle protein J, found in Streptomyces sp. (strain CB03234).